The primary structure comprises 682 residues: Potassium-transporting ATPase ATP-binding subunit (682 aa).

Helical transmembrane passes span P34–A54, A62–A82, I219–L239, and V254–I274. Residue D307 is the 4-aspartylphosphate intermediate of the active site. Residues D344, E348, F377–S384, and K395 contribute to the ATP site. Mg(2+) contacts are provided by D518 and D522. 3 helical membrane passes run F588–M608, A616–L636, and I656–L676.

The protein belongs to the cation transport ATPase (P-type) (TC 3.A.3) family. Type IA subfamily. In terms of assembly, the system is composed of three essential subunits: KdpA, KdpB and KdpC.

The protein resides in the cell inner membrane. The catalysed reaction is K(+)(out) + ATP + H2O = K(+)(in) + ADP + phosphate + H(+). Part of the high-affinity ATP-driven potassium transport (or Kdp) system, which catalyzes the hydrolysis of ATP coupled with the electrogenic transport of potassium into the cytoplasm. This subunit is responsible for energy coupling to the transport system and for the release of the potassium ions to the cytoplasm. The sequence is that of Potassium-transporting ATPase ATP-binding subunit from Escherichia coli O17:K52:H18 (strain UMN026 / ExPEC).